The sequence spans 361 residues: 3-dehydroquinate synthase (361 aa).

This sequence belongs to the archaeal-type DHQ synthase family.

The enzyme catalyses 2-amino-2,3,7-trideoxy-D-lyxo-hept-6-ulosonate + NAD(+) + H2O = 3-dehydroquinate + NH4(+) + NADH + H(+). Functionally, catalyzes the oxidative deamination and cyclization of 2-amino-3,7-dideoxy-D-threo-hept-6-ulosonic acid (ADH) to yield 3-dehydroquinate (DHQ), which is fed into the canonical shikimic pathway of aromatic amino acid biosynthesis. The polypeptide is 3-dehydroquinate synthase (Methanococcus vannielii (strain ATCC 35089 / DSM 1224 / JCM 13029 / OCM 148 / SB)).